The sequence spans 371 residues: DNA primase DnaG (371 aa).

A Toprim domain is found at 173–248; sequence DEIILVEGRA…DIDYVAVAPP (76 aa). Mg(2+) contacts are provided by Glu179, Asp221, and Asp223.

This sequence belongs to the archaeal DnaG primase family. As to quaternary structure, forms a ternary complex with MCM helicase and DNA. Component of the archaeal exosome complex. It depends on Mg(2+) as a cofactor.

It catalyses the reaction ssDNA + n NTP = ssDNA/pppN(pN)n-1 hybrid + (n-1) diphosphate.. RNA polymerase that catalyzes the synthesis of short RNA molecules used as primers for DNA polymerase during DNA replication. Also part of the exosome, which is a complex involved in RNA degradation. Acts as a poly(A)-binding protein that enhances the interaction between heteromeric, adenine-rich transcripts and the exosome. The sequence is that of DNA primase DnaG from Nanoarchaeum equitans (strain Kin4-M).